A 579-amino-acid polypeptide reads, in one-letter code: Cytochrome P450 monooxygenase ORF6 (579 aa).

Asn2 is a glycosylation site (N-linked (GlcNAc...) asparagine). The chain crosses the membrane as a helical span at residues 7 to 29 (PLGSFVGTTLLLFILYKLVKLAY). N-linked (GlcNAc...) asparagine glycosylation is found at Asn194 and Asn390. Cys512 is a binding site for heme.

This sequence belongs to the cytochrome P450 family. Requires heme as cofactor.

It localises to the membrane. Its pathway is sesquiterpene biosynthesis. Cytochrome P450 monooxygenase; part of the gene cluster that mediates the biosynthesis of PR-toxin, a bicyclic sesquiterpene belonging to the eremophilane class and acting as a mycotoxin. The first step of the pathway is catalyzed by the aristolochene synthase which performs the cyclization of trans,trans-farnesyl diphosphate (FPP) to the bicyclic sesquiterpene aristolochene. Following the formation of aristolochene, the non-oxygenated aristolochene is converted to the trioxygenated intermediate eremofortin B, via 7-epi-neopetasone. This conversion appears to involve three enzymes, a hydroxysterol oxidase-like enzyme, the quinone-oxidase prx3 that forms the quinone-type-structure in the bicyclic nucleus of aristolochene with the C8-oxo group and the C-3 hydroxyl group, and the P450 monooxygenase ORF6 that introduces the epoxide at the double bond between carbons 1 and 2. No monoxy or dioxy-intermediates have been reported to be released to the broth, so these three early oxidative reactions may be coupled together. Eremofortin B is further oxidized by another P450 monooxygenase, that introduces a second epoxide between carbons 7 and 11 prior to acetylation to eremofortin A by the acetyltransferase ORF8. The second epoxidation may be performed by a second P450 monooxygenase. After the acetylation step, eremofortin A is converted to eremofortin C and then to PR-toxin. First the conversion of eremofortin A to eremofortin C proceeds by oxidation of the side chain of the molecule at C-12 and is catalyzed by the short-chain oxidoreductase prx1. The cytochrome P450 monooxygenase ORF6 is probably also involved in this step. The primary alcohol formed at C-12 is finally oxidized by the short-chain alcohol dehydrogenase prx4 that forms PR-toxin. The chain is Cytochrome P450 monooxygenase ORF6 from Penicillium roqueforti (strain FM164).